Reading from the N-terminus, the 232-residue chain is Demethylmenaquinone methyltransferase (232 aa).

S-adenosyl-L-methionine is bound by residues T58, D79, and 104 to 105 (NA).

The protein belongs to the class I-like SAM-binding methyltransferase superfamily. MenG/UbiE family.

The enzyme catalyses a 2-demethylmenaquinol + S-adenosyl-L-methionine = a menaquinol + S-adenosyl-L-homocysteine + H(+). The protein operates within quinol/quinone metabolism; menaquinone biosynthesis; menaquinol from 1,4-dihydroxy-2-naphthoate: step 2/2. In terms of biological role, methyltransferase required for the conversion of demethylmenaquinol (DMKH2) to menaquinol (MKH2). In Bacillus licheniformis (strain ATCC 14580 / DSM 13 / JCM 2505 / CCUG 7422 / NBRC 12200 / NCIMB 9375 / NCTC 10341 / NRRL NRS-1264 / Gibson 46), this protein is Demethylmenaquinone methyltransferase.